We begin with the raw amino-acid sequence, 872 residues long: Alanine--tRNA ligase (872 aa).

4 residues coordinate Zn(2+): histidine 567, histidine 571, cysteine 669, and histidine 673.

It belongs to the class-II aminoacyl-tRNA synthetase family. Zn(2+) is required as a cofactor.

It localises to the cytoplasm. The catalysed reaction is tRNA(Ala) + L-alanine + ATP = L-alanyl-tRNA(Ala) + AMP + diphosphate. In terms of biological role, catalyzes the attachment of alanine to tRNA(Ala) in a two-step reaction: alanine is first activated by ATP to form Ala-AMP and then transferred to the acceptor end of tRNA(Ala). Also edits incorrectly charged Ser-tRNA(Ala) and Gly-tRNA(Ala) via its editing domain. In Streptococcus suis (strain 98HAH33), this protein is Alanine--tRNA ligase.